Here is a 378-residue protein sequence, read N- to C-terminus: MMLVRSVFRSQLRPSVSGGLQSASCYSSLSAASAEAERTIREGPRNDWSRDEIKSVYDSPLLDLLFHGAQVHRHVHNFREVQQCTLLSIKTGGCSEDCSYCPQSSRYSTGVKAQRLMSKDAVIDAAKKAKEAGSTRFCMGAAWRDTIGRKTNFSQILEYIKEIRGMGMEVCCTLGMIEKQQALELKKAGLTAYNHNLDTSREYYPNVITTRSYDDRLETLSHVRDAGINVCSGGIIGLGEAEEDRIGLLHTLATLPSHPESVPINALLAVKGTPLEDQKPVEIWEMIRMIGTARIVMPKAMVRLSAGRVRFSMSEQALCFLAGANSIFTGEKLLTTPNNDFDADQLMFKTLGLIPKPPSFSEDDSESENCEKVASASH.

The transit peptide at 1-26 (MMLVRSVFRSQLRPSVSGGLQSASCY) directs the protein to the mitochondrion. One can recognise a Radical SAM core domain in the interval 79-308 (REVQQCTLLS…KAMVRLSAGR (230 aa)). [4Fe-4S] cluster contacts are provided by Cys-94, Cys-98, and Cys-101. [2Fe-2S] cluster is bound by residues Cys-138, Cys-171, Cys-231, and Arg-303. Residues 357 to 378 (PPSFSEDDSESENCEKVASASH) are disordered.

It belongs to the radical SAM superfamily. Biotin synthase family. [4Fe-4S] cluster serves as cofactor. It depends on [2Fe-2S] cluster as a cofactor.

It is found in the mitochondrion. It catalyses the reaction (4R,5S)-dethiobiotin + (sulfur carrier)-SH + 2 reduced [2Fe-2S]-[ferredoxin] + 2 S-adenosyl-L-methionine = (sulfur carrier)-H + biotin + 2 5'-deoxyadenosine + 2 L-methionine + 2 oxidized [2Fe-2S]-[ferredoxin]. It participates in cofactor biosynthesis; biotin biosynthesis; biotin from 7,8-diaminononanoate: step 2/2. This Arabidopsis thaliana (Mouse-ear cress) protein is Biotin synthase, mitochondrial (BIO2).